The following is a 104-amino-acid chain: Ubiquitin-related modifier 1 homolog (104 aa).

Gly-104 is modified (1-thioglycine). Gly-104 participates in a covalent cross-link: Glycyl lysine isopeptide (Gly-Lys) (interchain with K-? in acceptor proteins).

It belongs to the URM1 family. As to quaternary structure, interacts with cer. C-terminal thiocarboxylation occurs in 2 steps, it is first acyl-adenylated (-COAMP) via the hesA/moeB/thiF part of the MOCS3 homolog, then thiocarboxylated (-COSH) via the rhodanese domain of the MOCS3 homolog.

It is found in the cytoplasm. It participates in tRNA modification; 5-methoxycarbonylmethyl-2-thiouridine-tRNA biosynthesis. Its function is as follows. Acts as a sulfur carrier required for 2-thiolation of mcm(5)S(2)U at tRNA wobble positions of cytosolic tRNA(Lys), tRNA(Glu) and tRNA(Gln). Serves as sulfur donor in tRNA 2-thiolation reaction by being thiocarboxylated (-COSH) at its C-terminus by MOCS3. The sulfur is then transferred to tRNA to form 2-thiolation of mcm(5)S(2)U. Also acts as a ubiquitin-like protein (UBL) that is covalently conjugated via an isopeptide bond to lysine residues of target proteins such as Prx2/Jafrac1, Ciao1, Eip71CD and GILT1. The thiocarboxylated form serves as substrate for conjugation and oxidative stress specifically induces the formation of UBL-protein conjugates. This chain is Ubiquitin-related modifier 1 homolog, found in Drosophila grimshawi (Hawaiian fruit fly).